The chain runs to 378 residues: Erythronate-4-phosphate dehydrogenase (378 aa).

Residues Ser45 and Thr66 each coordinate substrate. Residues Asp146 and Thr175 each contribute to the NAD(+) site. Arg208 is an active-site residue. Asp232 is a binding site for NAD(+). Glu237 is a catalytic residue. Catalysis depends on His254, which acts as the Proton donor. Gly257 contacts NAD(+). A substrate-binding site is contributed by Tyr258.

It belongs to the D-isomer specific 2-hydroxyacid dehydrogenase family. PdxB subfamily. In terms of assembly, homodimer.

It localises to the cytoplasm. It carries out the reaction 4-phospho-D-erythronate + NAD(+) = (R)-3-hydroxy-2-oxo-4-phosphooxybutanoate + NADH + H(+). It functions in the pathway cofactor biosynthesis; pyridoxine 5'-phosphate biosynthesis; pyridoxine 5'-phosphate from D-erythrose 4-phosphate: step 2/5. Its function is as follows. Catalyzes the oxidation of erythronate-4-phosphate to 3-hydroxy-2-oxo-4-phosphonooxybutanoate. The polypeptide is Erythronate-4-phosphate dehydrogenase (Escherichia fergusonii (strain ATCC 35469 / DSM 13698 / CCUG 18766 / IAM 14443 / JCM 21226 / LMG 7866 / NBRC 102419 / NCTC 12128 / CDC 0568-73)).